Here is a 308-residue protein sequence, read N- to C-terminus: tRNA dimethylallyltransferase (308 aa).

Residue 10 to 17 participates in ATP binding; that stretch reads GPTASGKT. 12 to 17 lines the substrate pocket; sequence TASGKT. Interaction with substrate tRNA stretches follow at residues 35–38 and 159–163; these read DSSL and QRIFR.

It belongs to the IPP transferase family. As to quaternary structure, monomer. It depends on Mg(2+) as a cofactor.

The catalysed reaction is adenosine(37) in tRNA + dimethylallyl diphosphate = N(6)-dimethylallyladenosine(37) in tRNA + diphosphate. In terms of biological role, catalyzes the transfer of a dimethylallyl group onto the adenine at position 37 in tRNAs that read codons beginning with uridine, leading to the formation of N6-(dimethylallyl)adenosine (i(6)A). This chain is tRNA dimethylallyltransferase, found in Francisella tularensis subsp. tularensis (strain FSC 198).